The chain runs to 209 residues: MIEIKMNIRWNVILGVIALCALAWFYSLNQETADLSELVKKPDSPDYVGYKMETTVFSPDGKKQYLALSDKIEHYTVNEQTLFTAPLVYLYPTTSNEKEKEKNANQNVDFFSTQSWKLSANQARLTKDQILYLEGNVVAQNLTSDSRLQRIETESAVVNLKTQDITSETQVKIKGKNFSSTGLKLVGNLRQQVATLKEQVKTYYEVSKQ.

A helical membrane pass occupies residues 7–26 (NIRWNVILGVIALCALAWFY).

This sequence belongs to the LptC family. As to quaternary structure, component of the lipopolysaccharide transport and assembly complex. Interacts with LptA and the LptBFG transporter complex.

Its subcellular location is the cell inner membrane. In terms of biological role, involved in the assembly of lipopolysaccharide (LPS). Required for the translocation of LPS from the inner membrane to the outer membrane. Facilitates the transfer of LPS from the inner membrane to the periplasmic protein LptA. Could be a docking site for LptA. The protein is Lipopolysaccharide export system protein LptC of Haemophilus influenzae (strain ATCC 51907 / DSM 11121 / KW20 / Rd).